We begin with the raw amino-acid sequence, 577 residues long: Arginine--tRNA ligase (577 aa).

The 'HIGH' region signature appears at 122 to 132; the sequence is PNVAKEMHVGH.

The protein belongs to the class-I aminoacyl-tRNA synthetase family. Monomer.

The protein resides in the cytoplasm. The catalysed reaction is tRNA(Arg) + L-arginine + ATP = L-arginyl-tRNA(Arg) + AMP + diphosphate. The chain is Arginine--tRNA ligase from Haemophilus influenzae (strain PittGG).